Here is a 69-residue protein sequence, read N- to C-terminus: DNA-directed RNA polymerase subunit omega (69 aa).

Belongs to the RNA polymerase subunit omega family. The RNAP catalytic core consists of 2 alpha, 1 beta, 1 beta' and 1 omega subunit. When a sigma factor is associated with the core the holoenzyme is formed, which can initiate transcription.

The catalysed reaction is RNA(n) + a ribonucleoside 5'-triphosphate = RNA(n+1) + diphosphate. Functionally, promotes RNA polymerase assembly. Latches the N- and C-terminal regions of the beta' subunit thereby facilitating its interaction with the beta and alpha subunits. The polypeptide is DNA-directed RNA polymerase subunit omega (Geotalea daltonii (strain DSM 22248 / JCM 15807 / FRC-32) (Geobacter daltonii)).